We begin with the raw amino-acid sequence, 179 residues long: Large ribosomal subunit protein uL5 (179 aa).

It belongs to the universal ribosomal protein uL5 family. As to quaternary structure, part of the 50S ribosomal subunit; part of the 5S rRNA/L5/L18/L25 subcomplex. Contacts the 5S rRNA and the P site tRNA. Forms a bridge to the 30S subunit in the 70S ribosome.

Its function is as follows. This is one of the proteins that bind and probably mediate the attachment of the 5S RNA into the large ribosomal subunit, where it forms part of the central protuberance. In the 70S ribosome it contacts protein S13 of the 30S subunit (bridge B1b), connecting the 2 subunits; this bridge is implicated in subunit movement. Contacts the P site tRNA; the 5S rRNA and some of its associated proteins might help stabilize positioning of ribosome-bound tRNAs. The chain is Large ribosomal subunit protein uL5 from Clostridium beijerinckii (strain ATCC 51743 / NCIMB 8052) (Clostridium acetobutylicum).